Here is a 502-residue protein sequence, read N- to C-terminus: ATP synthase subunit alpha (502 aa).

An ATP-binding site is contributed by 169 to 176; that stretch reads GDRQTGKT.

Belongs to the ATPase alpha/beta chains family. F-type ATPases have 2 components, CF(1) - the catalytic core - and CF(0) - the membrane proton channel. CF(1) has five subunits: alpha(3), beta(3), gamma(1), delta(1), epsilon(1). CF(0) has three main subunits: a(1), b(2) and c(9-12). The alpha and beta chains form an alternating ring which encloses part of the gamma chain. CF(1) is attached to CF(0) by a central stalk formed by the gamma and epsilon chains, while a peripheral stalk is formed by the delta and b chains.

The protein localises to the cell membrane. It carries out the reaction ATP + H2O + 4 H(+)(in) = ADP + phosphate + 5 H(+)(out). Produces ATP from ADP in the presence of a proton gradient across the membrane. The alpha chain is a regulatory subunit. The protein is ATP synthase subunit alpha of Streptococcus pyogenes serotype M12 (strain MGAS9429).